Consider the following 445-residue polypeptide: MKKLYIRTFGCQMNEYDSDKMADVLGASEELVKTDNPEEADVILFNTCSVREKAQERVFHDLGRVKHLKQSNPNLIIGVGGCVASQEGDAIVARAPYVDVVFGPQTLHRLPQLIAERRHSGRSQVDISFPEIEKFDNMPPARVEGASAFVSIMEGCSKYCTFCVVPYTRGEEVSRPLDDVLAEVAGLAGQGVREVTLLGQNVNAWRGEITRDGGEQGDFAFLLECVAEIPGIERLRFTTSHPREMTQRVFDAYAKIPKLVSHLHLPVQSGSDRILAAMKRGYSVLEFKSVVRKLRAARPDLSLSSDFIVGFPGETEEDFEKTMKLIDEVGFDASFSFVYSPRPGTPASDLADPVPQETKLRWLARLQKRIDQQAQAISQAMVGRVERALVEGLSRKDATELAARTGNNRVVNFVGNPRLIGQFVDLTITAALPHSLRGEIVTTET.

The 118-residue stretch at Lys-2–His-119 folds into the MTTase N-terminal domain. [4Fe-4S] cluster is bound by residues Cys-11, Cys-48, Cys-82, Cys-156, Cys-160, and Cys-163. The 237-residue stretch at Arg-142–Ser-378 folds into the Radical SAM core domain. The TRAM domain occupies Gln-379 to Thr-442.

This sequence belongs to the methylthiotransferase family. MiaB subfamily. Monomer. [4Fe-4S] cluster serves as cofactor.

It localises to the cytoplasm. It carries out the reaction N(6)-dimethylallyladenosine(37) in tRNA + (sulfur carrier)-SH + AH2 + 2 S-adenosyl-L-methionine = 2-methylsulfanyl-N(6)-dimethylallyladenosine(37) in tRNA + (sulfur carrier)-H + 5'-deoxyadenosine + L-methionine + A + S-adenosyl-L-homocysteine + 2 H(+). In terms of biological role, catalyzes the methylthiolation of N6-(dimethylallyl)adenosine (i(6)A), leading to the formation of 2-methylthio-N6-(dimethylallyl)adenosine (ms(2)i(6)A) at position 37 in tRNAs that read codons beginning with uridine. This Aromatoleum aromaticum (strain DSM 19018 / LMG 30748 / EbN1) (Azoarcus sp. (strain EbN1)) protein is tRNA-2-methylthio-N(6)-dimethylallyladenosine synthase.